A 330-amino-acid chain; its full sequence is GMP reductase (330 aa).

Cys180 (thioimidate intermediate) is an active-site residue. NADP(+) is bound at residue 209–232; the sequence is LIADGGIRHNGDIAKSVRFGASMV.

It belongs to the IMPDH/GMPR family. GuaC type 2 subfamily.

It catalyses the reaction IMP + NH4(+) + NADP(+) = GMP + NADPH + 2 H(+). Catalyzes the irreversible NADPH-dependent deamination of GMP to IMP. It functions in the conversion of nucleobase, nucleoside and nucleotide derivatives of G to A nucleotides, and in maintaining the intracellular balance of A and G nucleotides. In Lactobacillus delbrueckii subsp. bulgaricus (strain ATCC 11842 / DSM 20081 / BCRC 10696 / JCM 1002 / NBRC 13953 / NCIMB 11778 / NCTC 12712 / WDCM 00102 / Lb 14), this protein is GMP reductase.